The chain runs to 220 residues: UPF0319 protein YccT (220 aa).

Positions 1 to 20 (MKTGALATFLALCLPVTVFA) are cleaved as a signal peptide.

The protein belongs to the UPF0319 family.

The sequence is that of UPF0319 protein YccT from Salmonella paratyphi A (strain ATCC 9150 / SARB42).